A 185-amino-acid polypeptide reads, in one-letter code: Ribosome-recycling factor (185 aa).

Residues 140–166 are disordered; sequence KRQEKDGDITEDEQRSLEKQVQKVTDD.

This sequence belongs to the RRF family.

The protein resides in the cytoplasm. In terms of biological role, responsible for the release of ribosomes from messenger RNA at the termination of protein biosynthesis. May increase the efficiency of translation by recycling ribosomes from one round of translation to another. This is Ribosome-recycling factor from Lactobacillus johnsonii (strain CNCM I-12250 / La1 / NCC 533).